Here is a 174-residue protein sequence, read N- to C-terminus: MLTLIQGKKIVNHLRSRLAFEYNGQLIKILSKNIVAVGSLRREEKMLNDVDLLIIVPEKKLLKHVLPNIRIKGLSFSVKVCGERKCVLFIEWEKKTYQLDLFTALAEEKPYAIFHFTGPVSYLIRIRAALKKKNYKLNQYGLFKNQTLVPLKITTEKELIKELGFTYRIPKKRL.

The tract at residues 42–51 is involved in ssDNA binding; that stretch reads REEKMLNDVD. Mg(2+) contacts are provided by aspartate 49 and aspartate 51. The cysteines at positions 81 and 86 are disulfide-linked. Aspartate 100 is a Mg(2+) binding site.

It belongs to the DNA polymerase type-X family. It depends on Mg(2+) as a cofactor.

The protein localises to the virion. The enzyme catalyses DNA(n) + a 2'-deoxyribonucleoside 5'-triphosphate = DNA(n+1) + diphosphate. Its function is as follows. Error-prone polymerase lacking a proofreading 3'-5' exonuclease which catalyzes the gap-filling reaction during the DNA repair process. Specifically binds intermediates in the single-nucleotide base-excision repair process. Also catalyzes DNA polymerization with low nucleotide-insertion fidelity. Probably acts as a strategic DNA mutase, which gives rise to a rapid emergence of variants. Generates mismatched G-G pairs, in that case, the polymerase first binds the deoxynucleotide followed by mismatch formation. Together with the viral DNA ligase, fills the single nucleotide gaps generated by the AP endonuclease. Binds DNA with high affinity via the helix alphaE. The chain is Repair DNA polymerase X from Ornithodoros (relapsing fever ticks).